The primary structure comprises 288 residues: Hemin import ATP-binding protein HmuV (288 aa).

The ABC transporter domain occupies 31-269 (LRARGLVVER…DLLTRVYQHP (239 aa)). 68 to 75 (GPNGAGKS) contributes to the ATP binding site.

It belongs to the ABC transporter superfamily. Heme (hemin) importer (TC 3.A.1.14.5) family. As to quaternary structure, the complex is composed of two ATP-binding proteins (HmuV), two transmembrane proteins (HmuU) and a solute-binding protein (HmuT).

The protein localises to the cell membrane. Part of the ABC transporter complex HmuTUV involved in hemin import. Responsible for energy coupling to the transport system. The polypeptide is Hemin import ATP-binding protein HmuV (Nocardia farcinica (strain IFM 10152)).